The chain runs to 185 residues: UPF0149 protein XF_2010 (185 aa).

The protein belongs to the UPF0149 family.

The protein is UPF0149 protein XF_2010 of Xylella fastidiosa (strain 9a5c).